A 201-amino-acid chain; its full sequence is MAIILPELPYAYDALEPQFDAETMTLHHDKHHATYVANTNAALEKHPEIGENLEELLADVTKIPEDIRQTLINNGGGHLNHALFWELLSPEKQDVTPDVAQAIDDAFGSFDAFKEQFTAAATGRFGSGWAWLVVNKEGQLEITSTANQDTPISEGKKPILALDVWEHAYYLNYRNVRPNYIKAFFEIVNWKKVSELYQAAK.

Residues His27, His81, Asp163, and His167 each coordinate Mn(2+).

This sequence belongs to the iron/manganese superoxide dismutase family. In terms of assembly, homodimer. It depends on Mn(2+) as a cofactor.

The protein localises to the secreted. The enzyme catalyses 2 superoxide + 2 H(+) = H2O2 + O2. Destroys superoxide anion radicals which are normally produced within the cells and which are toxic to biological systems. The protein is Superoxide dismutase [Mn] (sodA) of Streptococcus pyogenes serotype M1.